A 146-amino-acid chain; its full sequence is Hemoglobin subunit beta (146 aa).

The region spanning 2-146 (HWTAEEKSAI…VAHALAHQYH (145 aa)) is the Globin domain. Heme b-binding residues include histidine 63 and histidine 92.

The protein belongs to the globin family. As to quaternary structure, heterotetramer of two alpha chains and two beta chains. Oxygenation results in dissociation to dimers. Red blood cells.

In terms of biological role, involved in oxygen transport from the lung to the various peripheral tissues. The chain is Hemoglobin subunit beta (HBB) from Erythrolamprus miliaris (South American water snake).